We begin with the raw amino-acid sequence, 87 residues long: Translation initiation factor IF-1 2 (87 aa).

The region spanning 1–72 (MAKEEVIEME…TKGRINFRHK (72 aa)) is the S1-like domain.

This sequence belongs to the IF-1 family. In terms of assembly, component of the 30S ribosomal translation pre-initiation complex which assembles on the 30S ribosome in the order IF-2 and IF-3, IF-1 and N-formylmethionyl-tRNA(fMet); mRNA recruitment can occur at any time during PIC assembly.

Its subcellular location is the cytoplasm. In terms of biological role, one of the essential components for the initiation of protein synthesis. Stabilizes the binding of IF-2 and IF-3 on the 30S subunit to which N-formylmethionyl-tRNA(fMet) subsequently binds. Helps modulate mRNA selection, yielding the 30S pre-initiation complex (PIC). Upon addition of the 50S ribosomal subunit IF-1, IF-2 and IF-3 are released leaving the mature 70S translation initiation complex. This Thiobacillus denitrificans (strain ATCC 25259 / T1) protein is Translation initiation factor IF-1 2.